The sequence spans 93 residues: 3-isopropylmalate dehydratase small subunit (93 aa).

The protein belongs to the LeuD family. LeuD type 1 subfamily. In terms of assembly, heterodimer of LeuC and LeuD.

The catalysed reaction is (2R,3S)-3-isopropylmalate = (2S)-2-isopropylmalate. The protein operates within amino-acid biosynthesis; L-leucine biosynthesis; L-leucine from 3-methyl-2-oxobutanoate: step 2/4. Functionally, catalyzes the isomerization between 2-isopropylmalate and 3-isopropylmalate, via the formation of 2-isopropylmaleate. This Actinoplanes teichomyceticus protein is 3-isopropylmalate dehydratase small subunit (leuD).